A 465-amino-acid chain; its full sequence is MLPSTIQTLTLFLTSGGVLLSLYVSASLSYLLYSDILLRFSSKITAPTMTLDCANASNVQAVNRSATKEMTFLLPEPEWTYPRLSCQGSTFQKALLISPHRFGEARGNSAPLIIREPFIACGPKECKHFALTHYAAQPGGYYNGTREDRNKLRHLISVKLGKIPTVENSIFHMAAWSGSACHDGREWTYIGVDGPDSNALIKIKYGEAYTDTYHSYANNILRTQESACNCIGGDCYLMITDGSASGISECRFLKIREGRIIKEIFPTGRVEHTEECTCGFASNKTIECACRDNSYTAKRPFVKLNVETDTAEIRLMCTETYLDTPRPDDGSITGPCESDGDKGRGGIKGGFVHQRMASKIGRWYSRTMSKTERMGMELYVKYDGDPWTDSDALAPSGVMVSMKEPGWYSFGFEIKDKKCDVPCIGIEMVHDGGKKTWHSAATAIYCLMGSGQLLWDTVTGVDMAL.

Residues 1–11 (MLPSTIQTLTL) lie on the Intravirion side of the membrane. A helical transmembrane segment spans residues 12–34 (FLTSGGVLLSLYVSASLSYLLYS). The involved in apical transport and lipid raft association stretch occupies residues 13 to 35 (LTSGGVLLSLYVSASLSYLLYSD). Over 35 to 465 (DILLRFSSKI…DTVTGVDMAL (431 aa)) the chain is Virion surface. A hypervariable stalk region region spans residues 38–85 (LRFSSKITAPTMTLDCANASNVQAVNRSATKEMTFLLPEPEWTYPRLS). N-linked (GlcNAc...) asparagine; by host glycosylation is found at N55 and N63. 8 cysteine pairs are disulfide-bonded: C86/C419, C121/C126, C181/C228, C230/C235, C276/C290, C278/C288, C317/C336, and C423/C446. The interval 88 to 465 (GSTFQKALLI…DTVTGVDMAL (378 aa)) is head of neuraminidase. R115 lines the substrate pocket. N143 carries an N-linked (GlcNAc...) asparagine; by host glycan. The Proton donor/acceptor role is filled by D148. R149 contributes to the substrate binding site. 274–275 (EE) lines the substrate pocket. The N-linked (GlcNAc...) asparagine; by host glycan is linked to N283. Residue R291 coordinates substrate. Residues D292 and D323 each contribute to the Ca(2+) site. The segment at 328-347 (DDGSITGPCESDGDKGRGGI) is disordered. Residue R373 coordinates substrate. Y408 serves as the catalytic Nucleophile.

Belongs to the glycosyl hydrolase 34 family. In terms of assembly, homotetramer. Requires Ca(2+) as cofactor. In terms of processing, N-glycosylated.

The protein resides in the virion membrane. It localises to the host apical cell membrane. It carries out the reaction Hydrolysis of alpha-(2-&gt;3)-, alpha-(2-&gt;6)-, alpha-(2-&gt;8)- glycosidic linkages of terminal sialic acid residues in oligosaccharides, glycoproteins, glycolipids, colominic acid and synthetic substrates.. With respect to regulation, inhibited by the neuraminidase inhibitors zanamivir (Relenza) and oseltamivir (Tamiflu). These drugs interfere with the release of progeny virus from infected cells and are effective against all influenza strains. Resistance to neuraminidase inhibitors is quite rare. In terms of biological role, catalyzes the removal of terminal sialic acid residues from viral and cellular glycoconjugates. Cleaves off the terminal sialic acids on the glycosylated HA during virus budding to facilitate virus release. Additionally helps virus spread through the circulation by further removing sialic acids from the cell surface. These cleavages prevent self-aggregation and ensure the efficient spread of the progeny virus from cell to cell. Otherwise, infection would be limited to one round of replication. Described as a receptor-destroying enzyme because it cleaves a terminal sialic acid from the cellular receptors. May facilitate viral invasion of the upper airways by cleaving the sialic acid moieties on the mucin of the airway epithelial cells. Likely to plays a role in the budding process through its association with lipid rafts during intracellular transport. May additionally display a raft-association independent effect on budding. Plays a role in the determination of host range restriction on replication and virulence. Sialidase activity in late endosome/lysosome traffic seems to enhance virus replication. This is Neuraminidase from Influenza B virus (strain B/Memphis/3/1989).